A 62-amino-acid polypeptide reads, in one-letter code: UPF0434 protein SPO3421 (62 aa).

This sequence belongs to the UPF0434 family.

This Ruegeria pomeroyi (strain ATCC 700808 / DSM 15171 / DSS-3) (Silicibacter pomeroyi) protein is UPF0434 protein SPO3421.